The following is a 273-amino-acid chain: Orotidine 5'-phosphate decarboxylase (273 aa).

Catalysis depends on Lys-97, which acts as the Proton donor.

The protein belongs to the OMP decarboxylase family. Type 2 subfamily.

The enzyme catalyses orotidine 5'-phosphate + H(+) = UMP + CO2. Its pathway is pyrimidine metabolism; UMP biosynthesis via de novo pathway; UMP from orotate: step 2/2. The sequence is that of Orotidine 5'-phosphate decarboxylase from Cellvibrio japonicus (strain Ueda107) (Pseudomonas fluorescens subsp. cellulosa).